The sequence spans 271 residues: GPN-loop GTPase 3 (271 aa).

13–18 is a GTP binding site; the sequence is GAGKST. Residues 70-72 carry the Gly-Pro-Asn (GPN)-loop; involved in dimer interface motif; sequence GPN. A GTP-binding site is contributed by 173-176; sequence SKVD.

This sequence belongs to the GPN-loop GTPase family. Heterodimers with GPN1 or GPN2. Binds to RNA polymerase II (RNAPII).

Functionally, small GTPase required for proper nuclear import of RNA polymerase II and III (RNAPII and RNAPIII). May act at an RNAP assembly step prior to nuclear import. The polypeptide is GPN-loop GTPase 3 (Eremothecium gossypii (strain ATCC 10895 / CBS 109.51 / FGSC 9923 / NRRL Y-1056) (Yeast)).